The sequence spans 159 residues: Phosphopantetheine adenylyltransferase (159 aa).

Residue serine 9 coordinates substrate. ATP is bound by residues 9–10 and histidine 17; that span reads SF. Positions 41, 73, and 87 each coordinate substrate. Residues 88-90, glutamate 98, and 122-128 contribute to the ATP site; these read GLR and YSFLSSS.

The protein belongs to the bacterial CoaD family. Homohexamer. Mg(2+) serves as cofactor.

The protein resides in the cytoplasm. It catalyses the reaction (R)-4'-phosphopantetheine + ATP + H(+) = 3'-dephospho-CoA + diphosphate. It functions in the pathway cofactor biosynthesis; coenzyme A biosynthesis; CoA from (R)-pantothenate: step 4/5. In terms of biological role, reversibly transfers an adenylyl group from ATP to 4'-phosphopantetheine, yielding dephospho-CoA (dPCoA) and pyrophosphate. The chain is Phosphopantetheine adenylyltransferase from Streptomyces avermitilis (strain ATCC 31267 / DSM 46492 / JCM 5070 / NBRC 14893 / NCIMB 12804 / NRRL 8165 / MA-4680).